Consider the following 579-residue polypeptide: MEKRVKYKSFVKDPGTLGSLELSEVMLLFVPNDPKSDLKLKVQTHNIKSQKYTKEGSNKPPWLNLTSKQGRSHIFEFENYPDMHACRDFITKALAKCEEEPNKLVVLTPAEQLSMAEFELRFKLLRENSELQKLHKQFVESKVLTEDEFWSTRKKLLGKDSIRKSKQQMGLKSMMVSGIKPSTDGRTNRVTFNLTSEIIFQIFAEKPAVRQAFINYVPKKMTEKDFWTKYFRAEYLYSTKNTAVAAAEAAEDEELAVFLKPDEILAQEARQKMRRVDPTLDMDADEGDDYTHLMDHGIQRDGTNDIIEPQNDQLKRSLLQDLNRHAAVVLEGRCINVQSEDTRIVAEALTRAKQVSKADGEITKDANQERLERMSRATEMEDLQAPQNFPLAPLSIKDPRDYFESQQGNILSEPRGAKASKRNVHEAYGLLKESILVIRMTGLSDPLIKPEVSFEVFSSLTRTISTAKNILGKNPQESFLDRLPKSTKDEVIHHWTSIQELVRHFWSSYPITTTYLSTKVGKLKDAMSNTYSLLDAMKQSVQSDLRHQVSLLVRPMQQALDAAFQHYESDLQRRTAKIT.

2 BSD domains span residues 107–161 and 186–238; these read LTPA…GKDS and RTNR…YLYS.

It belongs to the TFB1 family. As to quaternary structure, component of the 7-subunit TFIIH core complex composed of XPB, XPD, TFB1/GTF2H1, GTF2H2/P44, TFB4/GTF2H3, TFB2/GTF2H4 and TFB5/GTF2H5, which is active in NER. The core complex associates with the 3-subunit CDK-activating kinase (CAK) module composed of CYCH1/cyclin H1, CDKD and MAT1/At4g30820 to form the 10-subunit holoenzyme (holo-TFIIH) active in transcription.

Its subcellular location is the nucleus. In terms of biological role, component of the general transcription and DNA repair factor IIH (TFIIH) core complex, which is involved in general and transcription-coupled nucleotide excision repair (NER) of damaged DNA and, when complexed to CAK, in RNA transcription by RNA polymerase II. In NER, TFIIH acts by opening DNA around the lesion to allow the excision of the damaged oligonucleotide and its replacement by a new DNA fragment. In transcription, TFIIH has an essential role in transcription initiation. When the pre-initiation complex (PIC) has been established, TFIIH is required for promoter opening and promoter escape. Phosphorylation of the C-terminal tail (CTD) of the largest subunit of RNA polymerase II by the kinase module CAK controls the initiation of transcription. The protein is General transcription and DNA repair factor IIH subunit TFB1-3 of Arabidopsis thaliana (Mouse-ear cress).